Consider the following 124-residue polypeptide: UPF0225 protein SCO1677 (124 aa).

It belongs to the UPF0225 family.

The polypeptide is UPF0225 protein SCO1677 (Streptomyces coelicolor (strain ATCC BAA-471 / A3(2) / M145)).